Reading from the N-terminus, the 79-residue chain is Antimicrobial peptide ToAP2 (79 aa).

The N-terminal stretch at 1–23 is a signal peptide; the sequence is MQFKKQLLVIFFAYFLVVNESEA. Positions 50–79 are excised as a propeptide; it reads SLMKRELKNLYDPYQRSVEMERLLKELPLY.

The protein belongs to the non-disulfide-bridged peptide (NDBP) superfamily. Medium-length antimicrobial peptide (group 3) family. Expressed by the venom gland.

It is found in the secreted. Its subcellular location is the target cell membrane. In terms of biological role, antimicrobial peptide. Shows antibacterial activity against all M.massiliense bacterial strains tested. Has antifungal activity against Candida spp. and two Cryptococcus neoformans strains with MICs values ranging from 6.25 to 200 uM. Also shows an inhibitory activity on C.albicans biofilms at high concentrations. Exhibits chemotactic activity for monocytes, neutrophils, and eosinophils. Shows low cytotoxic activity and has weak hemolytic activity on human erythrocytes. In vivo, treatment of infected mice with M.massiliense reduces the bacterial load in the liver, lung, and spleen. May act by disrupting the integrity of the bacterial cell membrane. The protein is Antimicrobial peptide ToAP2 of Tityus obscurus (Amazonian scorpion).